Reading from the N-terminus, the 255-residue chain is MNTARLNQGTPLLLNAVSKHYAENIVLNQLDLHIPAGQFVAVVGRSGGGKSTLLHLLAGLETPTAGDVLAGTTPLAEIQDDTRMMFQDARLLPWKSVIDNVGLGLKGQWRDAARRALAAAGLENRAGEWPAALSGGQKQRVALARALIHRPGLLLLDEPLGALDALTRLEMQDLIVSLWQQHGFTVLLVTHDVSEAVAMADRVLLIEEGKISLDLTVDIPRPRRLGSVRLAELEAEVLQRVMRRGHSEQLIRRHG.

In terms of domain architecture, ABC transporter spans 12–233 (LLLNAVSKHY…RLGSVRLAEL (222 aa)). Position 44–51 (44–51 (GRSGGGKS)) interacts with ATP.

It belongs to the ABC transporter superfamily. Aliphatic sulfonates importer (TC 3.A.1.17.2) family. As to quaternary structure, the complex is composed of two ATP-binding proteins (SsuB), two transmembrane proteins (SsuC) and a solute-binding protein (SsuA).

Its subcellular location is the cell inner membrane. The catalysed reaction is ATP + H2O + aliphatic sulfonate-[sulfonate-binding protein]Side 1 = ADP + phosphate + aliphatic sulfonateSide 2 + [sulfonate-binding protein]Side 1.. Part of the ABC transporter complex SsuABC involved in aliphatic sulfonates import. Responsible for energy coupling to the transport system. The protein is Aliphatic sulfonates import ATP-binding protein SsuB of Shigella flexneri.